The following is a 449-amino-acid chain: MAKAAIIGLGRSGIAAARCLKRDGWQVTLSDRSDSPSLQATKTNLEREGIIVNLGQNLSLEASDLPNLIVVSPGVPWDAPILITAREKGIDTIGELELAWRYLQSSPWLGITGTNGKTTTTALCAAIFQKAGLNAPSCGNIGYAACELALKADKYDWIIAEISSYQIESSRDLSPKIGIWTTFTPDHLSRHQTLENYYQIKASLLQRSDRQILNGDDPYLRQIGVSQWQQAYWTSVQGKAALLGDPSRGVYLQDNWIVAFGELIAPVNLLKMVGSHNQQNLLMAVAAARLAGIEKKAITEAIATFPGVAHRLEYVCTYKGLDFINDSKATNYDAAAVGLQSVPSPAILIAGGEAKAGDDRAWIAEIKAKVATVLLIGDAAADFARRLQSAGYQDYECVETMDRAVQRAAELGPAKEAKVVLLSPACASFDQYPSFEHRGTHFRQLSLQL.

113–119 (GTNGKTT) provides a ligand contact to ATP.

Belongs to the MurCDEF family.

The protein localises to the cytoplasm. It carries out the reaction UDP-N-acetyl-alpha-D-muramoyl-L-alanine + D-glutamate + ATP = UDP-N-acetyl-alpha-D-muramoyl-L-alanyl-D-glutamate + ADP + phosphate + H(+). It participates in cell wall biogenesis; peptidoglycan biosynthesis. Cell wall formation. Catalyzes the addition of glutamate to the nucleotide precursor UDP-N-acetylmuramoyl-L-alanine (UMA). This Microcystis aeruginosa (strain NIES-843 / IAM M-2473) protein is UDP-N-acetylmuramoylalanine--D-glutamate ligase.